A 328-amino-acid polypeptide reads, in one-letter code: Probable cytosolic iron-sulfur protein assembly protein 1 (328 aa).

WD repeat units lie at residues 12 to 49 (LHGD…LVEE), 54 to 93 (AHKK…YSGE), 102 to 141 (GHEN…EEFE), 148 to 187 (EHSQ…WECA), 192 to 233 (GHGG…ADVF), 246 to 284 (VHTR…RWEV), and 291 to 328 (AHTV…LREE).

Belongs to the WD repeat CIA1 family. Interacts with NAR1.

It localises to the cytoplasm. It is found in the nucleus. Essential component of the cytosolic iron-sulfur (Fe/S) protein assembly machinery. Required for the maturation of extramitochondrial Fe/S proteins. The chain is Probable cytosolic iron-sulfur protein assembly protein 1 from Eremothecium gossypii (strain ATCC 10895 / CBS 109.51 / FGSC 9923 / NRRL Y-1056) (Yeast).